We begin with the raw amino-acid sequence, 518 residues long: MAVALGCAIQASLNQGSVFQEYDTDCEVFRQRFRQFQYREAAGPHEAFNKLWELCCQWLKPKMRSKEQILELLVLEQFLTILPTEIETWVREHCPENRERVVSLIEDLQRELEIPEQQVDMHDMLLEELAPVGTAHIPPTMHLESPALQVMGPAQEAPVAEAWIPQAGPPELNYSATGECQNFLDPGYPLPKLDMNFSLENREEPWVKELQDSKEMKQLLDSKIGFEIGIENEEDTSKQKKMETMYPFIVTLEGNALQGPILQKDYVQLENQWETPPEDLQRDLAKLVDQQNPTLGETPENSNLEEPLNPKPHKKKSPGEKPHRCPQCGKCFARKSQLTGHQRIHSGEEPHKCPECGKRFLRSSDLYRHQRLHTGERPYECTVCKKRFTRRSHLIGHQRTHSEEETYKCLECGKSFCHGSSLKRHLKTHTGEKPHRCHNCGKSFSRLTALTLHQRTHTEERPFKCNYCGKSFRQRPSLVIHLRIHTGEKPYKCTHCSKSFRQRAGLIMHQVTHFRGLI.

In terms of domain architecture, SCAN box spans 30 to 112 (RQRFRQFQYR…SLIEDLQREL (83 aa)). A compositionally biased stretch (polar residues) spans 292–304 (NPTLGETPENSNL). A disordered region spans residues 292–325 (NPTLGETPENSNLEEPLNPKPHKKKSPGEKPHRC). 7 consecutive C2H2-type zinc fingers follow at residues 323–345 (HRCP…QRIH), 351–373 (HKCP…QRLH), 379–401 (YECT…QRTH), 407–429 (YKCL…LKTH), 435–457 (HRCH…QRTH), 463–485 (FKCN…LRIH), and 491–513 (YKCT…QVTH).

This sequence belongs to the krueppel C2H2-type zinc-finger protein family.

It localises to the nucleus. May be involved in transcriptional regulation. This is Zinc finger protein 449 (ZNF449) from Pan troglodytes (Chimpanzee).